Consider the following 263-residue polypeptide: 5'-nucleotidase SurE (263 aa).

A divalent metal cation-binding residues include Asp-8, Asp-9, Ser-40, and Asn-93.

The protein belongs to the SurE nucleotidase family. It depends on a divalent metal cation as a cofactor.

Its subcellular location is the cytoplasm. It catalyses the reaction a ribonucleoside 5'-phosphate + H2O = a ribonucleoside + phosphate. Functionally, nucleotidase that shows phosphatase activity on nucleoside 5'-monophosphates. The sequence is that of 5'-nucleotidase SurE from Caulobacter vibrioides (strain ATCC 19089 / CIP 103742 / CB 15) (Caulobacter crescentus).